A 186-amino-acid polypeptide reads, in one-letter code: Intraflagellar transport protein 27 homolog (186 aa).

GTP contacts are provided by residues 12–19 (GDPTVGKT), 64–68 (DSAGK), and 123–126 (NKTD).

The protein belongs to the small GTPase superfamily. Rab family. As to quaternary structure, component of the IFT complex B, at least composed of IFT20, IFT22, IFT25, IFT27, IFT46, IFT52, TRAF3IP1/IFT54, IFT57, IFT74, IFT80, IFT81, and IFT88. Interacts with IFT25. Interacts with IFT70B. Interacts with RABL2/RABL2A; binding is equal in the presence of GTP or GDP. Interacts with IFT88. Interacts with ARL6; recognizes and binds with the GTP-free form of ARL6.

The protein localises to the cell projection. The protein resides in the cilium. Its subcellular location is the cytoplasm. It is found in the flagellum. In terms of biological role, small GTPase-like component of the intraflagellar transport (IFT) complex B that promotes the exit of the BBSome complex from cilia via its interaction with ARL6. Not involved in entry of the BBSome complex into cilium. Prevents aggregation of GTP-free ARL6. Required for hedgehog signaling. Forms a subcomplex within the IFT complex B with IFT25. Its role in intraflagellar transport is mainly seen in tissues rich in ciliated cells such as kidney and testis. Essential for male fertility, spermiogenesis and sperm flagella formation. Plays a role in the early development of the kidney. May be involved in the regulation of ureteric bud initiation. The sequence is that of Intraflagellar transport protein 27 homolog (IFT27) from Bos taurus (Bovine).